The sequence spans 236 residues: tRNA (guanine-N(7)-)-methyltransferase (236 aa).

Residues glutamate 68, glutamate 93, aspartate 120, and aspartate 143 each coordinate S-adenosyl-L-methionine. Aspartate 143 is a catalytic residue. Substrate is bound by residues lysine 147, aspartate 179, and 212 to 215 (TKFE).

The protein belongs to the class I-like SAM-binding methyltransferase superfamily. TrmB family.

It carries out the reaction guanosine(46) in tRNA + S-adenosyl-L-methionine = N(7)-methylguanosine(46) in tRNA + S-adenosyl-L-homocysteine. The protein operates within tRNA modification; N(7)-methylguanine-tRNA biosynthesis. Catalyzes the formation of N(7)-methylguanine at position 46 (m7G46) in tRNA. This chain is tRNA (guanine-N(7)-)-methyltransferase, found in Nitrosococcus oceani (strain ATCC 19707 / BCRC 17464 / JCM 30415 / NCIMB 11848 / C-107).